Consider the following 356-residue polypeptide: Histidinol-phosphate aminotransferase (356 aa).

Residue lysine 214 is modified to N6-(pyridoxal phosphate)lysine.

The protein belongs to the class-II pyridoxal-phosphate-dependent aminotransferase family. Histidinol-phosphate aminotransferase subfamily. Homodimer. Pyridoxal 5'-phosphate serves as cofactor.

The enzyme catalyses L-histidinol phosphate + 2-oxoglutarate = 3-(imidazol-4-yl)-2-oxopropyl phosphate + L-glutamate. It functions in the pathway amino-acid biosynthesis; L-histidine biosynthesis; L-histidine from 5-phospho-alpha-D-ribose 1-diphosphate: step 7/9. In Escherichia coli O9:H4 (strain HS), this protein is Histidinol-phosphate aminotransferase.